The chain runs to 394 residues: Elongation factor Tu 1 (394 aa).

The tr-type G domain maps to 10-204; sequence KPHVNVGTIG…ALDSYIPEPE (195 aa). Positions 19-26 are G1; that stretch reads GHVDHGKT. Residue 19–26 participates in GTP binding; sequence GHVDHGKT. Thr-26 serves as a coordination point for Mg(2+). Residues 60-64 are G2; sequence GITIS. The G3 stretch occupies residues 81–84; that stretch reads DCPG. Residues 81–85 and 136–139 each bind GTP; these read DCPGH and NKCD. The G4 stretch occupies residues 136–139; it reads NKCD. The interval 174-176 is G5; it reads SAL.

This sequence belongs to the TRAFAC class translation factor GTPase superfamily. Classic translation factor GTPase family. EF-Tu/EF-1A subfamily. As to quaternary structure, monomer.

Its subcellular location is the cytoplasm. It carries out the reaction GTP + H2O = GDP + phosphate + H(+). Functionally, GTP hydrolase that promotes the GTP-dependent binding of aminoacyl-tRNA to the A-site of ribosomes during protein biosynthesis. This is Elongation factor Tu 1 from Photorhabdus laumondii subsp. laumondii (strain DSM 15139 / CIP 105565 / TT01) (Photorhabdus luminescens subsp. laumondii).